The primary structure comprises 727 residues: Iron-sulfur clusters transporter atm1, mitochondrial (727 aa).

Residues 46–97 (NSPLRKDASKEPALASNSKTTNPIPTQASASVNPPKDARNATTAKKDLLSET) form a disordered region. Residues 60–77 (ASNSKTTNPIPTQASASV) show a composition bias toward polar residues. A compositionally biased stretch (basic and acidic residues) spans 81 to 94 (KDARNATTAKKDLL). A helical membrane pass occupies residues 131 to 152 (VGTALSLLVGAKILNVEVPFYF). The 291-residue stretch at 131–421 (VGTALSLLVG…LGSVYRELRQ (291 aa)) folds into the ABC transmembrane type-1 domain. At 153–175 (KSIVDSMNIDFATVGGTAYTVAG) the chain is on the mitochondrial intermembrane side. The helical transmembrane segment at 176-199 (SMIIAYGVTRIGATLFQELRNAVF) threads the bilayer. Residues 200-248 (ASVAQKAIRRVARNVFEHLLRLDLNFHLSRQTGGLTRAIDRGTKGISFL) are Mitochondrial matrix-facing. A helical transmembrane segment spans residues 249–272 (LTSMVFHVVPTALEISLVCGILTY). Position 273 (Q273) is a topological domain, mitochondrial intermembrane. Residues 274 to 294 (YGFQFAAITAATMVAYTAFTI) form a helical membrane-spanning segment. The Mitochondrial matrix segment spans residues 295–360 (TTTAWRTKFR…ASIKVTTSLA (66 aa)). Residues 300-304 (RTKFR) and 363-366 (NSGQ) contribute to the glutathione site. Residues 361 to 379 (FLNSGQNMIFSSALAAMMY) form a helical membrane-spanning segment. The Mitochondrial intermembrane segment spans residues 380 to 394 (LAANGVANGNLTVGD). Residues 395 to 416 (LVMVNQLVFQLSVPLNFLGSVY) form a helical membrane-spanning segment. G413 contacts glutathione. The Mitochondrial matrix portion of the chain corresponds to 417-727 (RELRQSLLDM…DMAPGPKAQQ (311 aa)). Residues 456 to 692 (IRFENVTFGY…NGIYAELWNA (237 aa)) form the ABC transporter domain. ATP is bound by residues Y465 and 489 to 500 (GPSGCGKSTILR). Residues 702–719 (EFERETERDDVESKERDM) show a composition bias toward basic and acidic residues. Residues 702-727 (EFERETERDDVESKERDMAPGPKAQQ) are disordered.

The protein belongs to the ABC transporter superfamily. ABCB family. Heavy Metal importer (TC 3.A.1.210) subfamily. Homodimer.

Its subcellular location is the mitochondrion inner membrane. Performs an essential function in the generation of cytoplasmic iron-sulfur proteins by mediating the ATP-dependent export of Fe/S cluster precursors synthesized by nfs1 and other mitochondrial proteins. Hydrolyzes ATP. Binds glutathione and may function by transporting a glutathione-conjugated iron-sulfur compound. In Aspergillus fumigatus (strain ATCC MYA-4609 / CBS 101355 / FGSC A1100 / Af293) (Neosartorya fumigata), this protein is Iron-sulfur clusters transporter atm1, mitochondrial.